The chain runs to 317 residues: Phosphatidylglycerol--prolipoprotein diacylglyceryl transferase 2 (317 aa).

The next 4 membrane-spanning stretches (helical) occupy residues 19–39, 51–71, 93–113, and 120–140; these read IPLRAYAFCIILGVFAAVWLG, GVIADVTLWAVPFGLVGGRLY, VWEGGLGIWGAIALGAVGAWI, and IPLPAFADAVAPGIVLAQAIG. Arginine 141 serves as a coordination point for a 1,2-diacyl-sn-glycero-3-phospho-(1'-sn-glycerol). Helical transmembrane passes span 180–200, 211–230, and 241–261; these read PTFLYESLWNIGVAALILWAA, FALYVAAYTVGRFGTEYLRI, and LNNWTSVLVFLGAVACLVVSA. Residues 275 to 317 form a disordered region; it reads GAGADGRTDDPRPADASVGLASGPPGNSTPRRATESWNVRNRS. A compositionally biased stretch (polar residues) spans 299 to 317; the sequence is PGNSTPRRATESWNVRNRS.

It belongs to the Lgt family.

It is found in the cell membrane. The enzyme catalyses L-cysteinyl-[prolipoprotein] + a 1,2-diacyl-sn-glycero-3-phospho-(1'-sn-glycerol) = an S-1,2-diacyl-sn-glyceryl-L-cysteinyl-[prolipoprotein] + sn-glycerol 1-phosphate + H(+). The protein operates within protein modification; lipoprotein biosynthesis (diacylglyceryl transfer). Functionally, catalyzes the transfer of the diacylglyceryl group from phosphatidylglycerol to the sulfhydryl group of the N-terminal cysteine of a prolipoprotein, the first step in the formation of mature lipoproteins. The chain is Phosphatidylglycerol--prolipoprotein diacylglyceryl transferase 2 from Streptomyces coelicolor (strain ATCC BAA-471 / A3(2) / M145).